We begin with the raw amino-acid sequence, 446 residues long: Glucose transporter GlcP (446 aa).

At 1 to 6 (MKANKY) the chain is on the cytoplasmic side. A helical transmembrane segment spans residues 7–31 (LIFILGALGGLLYGYDNGVISGALL). Over 32–38 (FIHKDIP) the chain is Extracellular. A helical membrane pass occupies residues 39-64 (LNSTTEGIVVSSMLIGAIVGAGSSGP). The Cytoplasmic segment spans residues 65–70 (LADKLG). The chain crosses the membrane as a helical span at residues 71 to 90 (RRRLVMLIAIVFIIGALILA). Residues 91-94 (ASTN) lie on the Extracellular side of the membrane. Residues 95–122 (LALLIIGRLIIGLAVGGSMSTVPVYLSE) form a helical membrane-spanning segment. Residues 123–129 (MAPTEYR) are Cytoplasmic-facing. The helical transmembrane segment at 130–152 (GSLGSLNQLMITIGILAAYLVNY) threads the bilayer. At 153–154 (AF) the chain is on the extracellular side. The helical transmembrane segment at 155 to 180 (ADIEGWRWMLGLAVVPSVILLVGIYF) threads the bilayer. Residues 181 to 234 (MPESPRWLLENRNEEAARQVMKITYDDSEIDKELKEMKEINAISESTWTVIKSP) lie on the Cytoplasmic side of the membrane. Residues 235–269 (WLGRILIVGCIFAIFQQFIGINAVIFYSSSIFAKA) form a helical membrane-spanning segment. Residues 270-272 (GLG) lie on the Extracellular side of the membrane. A helical membrane pass occupies residues 273–295 (EAASILGSVGIGTINVLVTIVAI). Over 296-303 (FVVDKIDR) the chain is Cytoplasmic. Residues 304 to 324 (KKLLVGGNIGMIASLLIMAIL) form a helical membrane-spanning segment. The Extracellular segment spans residues 325 to 329 (IWTIG). A helical membrane pass occupies residues 330–363 (IASSAWIIIVCLSLFIVFFGISWGPVLWVMLPEL). Residues 364 to 370 (FPMRARG) are Cytoplasmic-facing. The chain crosses the membrane as a helical span at residues 371-399 (AATGISALVLNIGTLIVSLFFPILSDALS). Residues 400–401 (TE) are Extracellular-facing. The chain crosses the membrane as a helical span at residues 402-420 (WVFLIFAFIGVLAMIFVIK). The Cytoplasmic portion of the chain corresponds to 421-446 (FLPETRGRSLEEIEYELRERTGARTE).

This sequence belongs to the major facilitator superfamily. Sugar transporter (TC 2.A.1.1) family.

It is found in the cell membrane. Inhibited by carbonyl cyanide m-chlorophenylhydrazone (CCCP) and by the human glucose transport inhibitors cytochalasin B, phloretin, and forskolin. In terms of biological role, transporter highly specific for glucose uptake. In Staphylococcus epidermidis (strain ATCC 12228 / FDA PCI 1200), this protein is Glucose transporter GlcP.